The sequence spans 927 residues: Transmembrane protein 132 homolog (927 aa).

The first 18 residues, Met-1–Ser-18, serve as a signal peptide directing secretion. A helical membrane pass occupies residues Phe-749 to Val-769. The interval Leu-789–Thr-842 is disordered. A compositionally biased stretch (polar residues) spans Thr-817–Thr-842.

The protein belongs to the TMEM132 family. As to quaternary structure, interacts with gex-3. As to expression, specifically expressed in neurons.

Its subcellular location is the membrane. Functionally, regulates neuronal morphology via inhibition of the WAVE regulatory complex (WCR), a complex that controls F-actin cytoskeletal dynamics. In Caenorhabditis elegans, this protein is Transmembrane protein 132 homolog.